Reading from the N-terminus, the 449-residue chain is Elongation factor 1-alpha C (449 aa).

One can recognise a tr-type G domain in the interval 5–234 (KQHVSIVVIG…DACDPPKRPV (230 aa)). The G1 stretch occupies residues 14 to 21 (GHVDSGKS). Position 14–21 (14–21 (GHVDSGKS)) interacts with GTP. The residue at position 55 (Lys55) is an N6,N6-dimethyllysine. The interval 70–74 (GITID) is G2. An N6,N6,N6-trimethyllysine modification is found at Lys79. Positions 91 to 94 (DAPG) are G3. GTP-binding positions include 91 to 95 (DAPGH) and 153 to 156 (NKMD). The interval 153-156 (NKMD) is G4. N6,N6,N6-trimethyllysine is present on Lys187. Residues 194–196 (SGW) form a G5 region. Lys265 carries the N6-methyllysine modification. N6,N6,N6-trimethyllysine occurs at positions 310 and 400.

The protein belongs to the TRAFAC class translation factor GTPase superfamily. Classic translation factor GTPase family. EF-Tu/EF-1A subfamily.

The protein localises to the cytoplasm. In terms of biological role, this protein promotes the GTP-dependent binding of aminoacyl-tRNA to the A-site of ribosomes during protein biosynthesis. The sequence is that of Elongation factor 1-alpha C (TEF-C) from Porphyra purpurea (Red seaweed).